The following is a 220-amino-acid chain: uncharacterized protein (220 aa).

Residues F20–I42 traverse the membrane as a helical segment.

Its subcellular location is the membrane. This is an uncharacterized protein from Rickettsia prowazekii (strain Madrid E).